The sequence spans 454 residues: Bifunctional protein GlmU (454 aa).

The segment at 1-229 is pyrophosphorylase; it reads MQRYAVVLAA…FDEIMGVNDR (229 aa). UDP-N-acetyl-alpha-D-glucosamine is bound by residues 8–11, lysine 22, glutamine 72, and 77–78; these read LAAG and GT. Aspartate 102 contacts Mg(2+). UDP-N-acetyl-alpha-D-glucosamine-binding residues include glycine 139, glutamate 154, and asparagine 227. Position 227 (asparagine 227) interacts with Mg(2+). The tract at residues 230-250 is linker; that stretch reads VALSKAEQAMRQRINEYHMRN. The segment at 251-454 is N-acetyltransferase; the sequence is GVTLIDPSST…KPGYLNKNKE (204 aa). UDP-N-acetyl-alpha-D-glucosamine is bound by residues arginine 332 and lysine 350. The active-site Proton acceptor is histidine 362. UDP-N-acetyl-alpha-D-glucosamine is bound by residues tyrosine 365 and asparagine 376. Residues 385–386, alanine 422, and arginine 439 contribute to the acetyl-CoA site; that span reads NY.

This sequence in the N-terminal section; belongs to the N-acetylglucosamine-1-phosphate uridyltransferase family. In the C-terminal section; belongs to the transferase hexapeptide repeat family. Homotrimer. Mg(2+) is required as a cofactor.

Its subcellular location is the cytoplasm. The enzyme catalyses alpha-D-glucosamine 1-phosphate + acetyl-CoA = N-acetyl-alpha-D-glucosamine 1-phosphate + CoA + H(+). The catalysed reaction is N-acetyl-alpha-D-glucosamine 1-phosphate + UTP + H(+) = UDP-N-acetyl-alpha-D-glucosamine + diphosphate. It participates in nucleotide-sugar biosynthesis; UDP-N-acetyl-alpha-D-glucosamine biosynthesis; N-acetyl-alpha-D-glucosamine 1-phosphate from alpha-D-glucosamine 6-phosphate (route II): step 2/2. Its pathway is nucleotide-sugar biosynthesis; UDP-N-acetyl-alpha-D-glucosamine biosynthesis; UDP-N-acetyl-alpha-D-glucosamine from N-acetyl-alpha-D-glucosamine 1-phosphate: step 1/1. The protein operates within bacterial outer membrane biogenesis; LPS lipid A biosynthesis. In terms of biological role, catalyzes the last two sequential reactions in the de novo biosynthetic pathway for UDP-N-acetylglucosamine (UDP-GlcNAc). The C-terminal domain catalyzes the transfer of acetyl group from acetyl coenzyme A to glucosamine-1-phosphate (GlcN-1-P) to produce N-acetylglucosamine-1-phosphate (GlcNAc-1-P), which is converted into UDP-GlcNAc by the transfer of uridine 5-monophosphate (from uridine 5-triphosphate), a reaction catalyzed by the N-terminal domain. This chain is Bifunctional protein GlmU, found in Staphylococcus carnosus (strain TM300).